Here is a 236-residue protein sequence, read N- to C-terminus: Outer membrane protein P.III (236 aa).

The signal sequence occupies residues 1–22; the sequence is MTKQLKLSALFVALLASGTAVA. 4 consecutive repeat copies span residues 69–70, 71–72, 73–74, and 75–76. The tract at residues 69–76 is 4 X 2 AA tandem repeats of X-P; the sequence is VPEPEPAP. One can recognise an OmpA-like domain in the interval 86-223; that stretch reads YVDETISLSA…RVDVKIRSIV (138 aa). A disulfide bridge links Cys-185 with Cys-208.

This sequence belongs to the outer membrane OOP (TC 1.B.6) superfamily.

It localises to the cell outer membrane. The protein is Outer membrane protein P.III of Neisseria gonorrhoeae.